The chain runs to 499 residues: Alpha-L-arabinofuranosidase B (499 aa).

Positions 1–17 (MFSRRNLLALGLAATVS) are cleaved as a signal peptide. A catalytic region spans residues 18–335 (AGPCDIYEAG…ENIVAAKYVV (318 aa)). Intrachain disulfides connect C21–C31, C81–C86, and C176–C177. N-linked (GlcNAc...) asparagine glycosylation is present at N83. N202 carries N-linked (GlcNAc...) asparagine glycosylation. D219 contributes to the substrate binding site. E221 serves as the catalytic Nucleophile. Substrate contacts are provided by N222, N223, and G296. D297 functions as the Proton donor in the catalytic mechanism. Residues 336 to 499 (GSLVSGPSFT…SFEIETAFAS (164 aa)) form an ABD region. The cysteines at positions 401 and 439 are disulfide-linked. Substrate contacts are provided by H416, N418, F419, D435, H463, E465, L468, and D488.

It belongs to the glycosyl hydrolase 54 family.

Its subcellular location is the secreted. It catalyses the reaction Hydrolysis of terminal non-reducing alpha-L-arabinofuranoside residues in alpha-L-arabinosides.. It functions in the pathway glycan metabolism; L-arabinan degradation. In terms of biological role, alpha-L-arabinofuranosidase involved in the degradation of arabinoxylan, a major component of plant hemicellulose. Able to hydrolyze 1,5-, 1,3- and 1,2-alpha-linkages not only in L-arabinofuranosyl oligosaccharides, but also in polysaccharides containing terminal non-reducing L-arabinofuranoses in side chains, like L-arabinan, arabinogalactan and arabinoxylan. The sequence is that of Alpha-L-arabinofuranosidase B (abfB) from Aspergillus kawachii (strain NBRC 4308) (White koji mold).